A 41-amino-acid chain; its full sequence is Large ribosomal subunit protein bL36 (41 aa).

This sequence belongs to the bacterial ribosomal protein bL36 family.

This chain is Large ribosomal subunit protein bL36, found in Hydrogenovibrio crunogenus (strain DSM 25203 / XCL-2) (Thiomicrospira crunogena).